The chain runs to 956 residues: Calsyntenin-3 (956 aa).

An N-terminal signal peptide occupies residues 1-19 (MTLLLLPLLLASLLASCSC). The Cytoplasmic segment spans residues 1–30 (MTLLLLPLLLASLLASCSCNKANKHKPWIE). Residues 20–847 (NKANKHKPWI…SHRNSMIPSA (828 aa)) are Extracellular-facing. 2 Cadherin domains span residues 29–145 (IEAE…APVF) and 146–246 (VERL…KPSW). The helical intramembrane region spans 31–51 (AEYQGIVMENDNTVLLNPPLF). The Cytoplasmic segment spans residues 52–71 (ALDKDAPLRYAGEICGFRLH). An intramembrane region (helical) is located at residues 72 to 94 (GSGVPFEAVILDKATGEGLIRAK). The Cytoplasmic portion of the chain corresponds to 95–151 (EPVDCEAQKEHTFTIQAYDCGEGPDGANTKKSHKATVHVRVNDVNEFAPVFVERLYR). The segment at residues 152-172 (AAVTEGKLYDRILRVEAIDGD) is an intramembrane region (helical). The Cytoplasmic portion of the chain corresponds to 173 to 255 (CSPQYSQICY…WQGWNKRIEY (83 aa)). Residues 256-276 (APGAGSLALFPGIRLETCDEP) form a helical membrane-spanning segment. Residues 277–364 (LWNIQATIEL…PLGGPSGLGS (88 aa)) lie on the Lumenal side of the membrane. 5 N-linked (GlcNAc...) asparagine glycosylation sites follow: Asn299, Asn327, Asn347, Asn507, and Asn740. The chain crosses the membrane as a helical span at residues 848–868 (ATLIIVVCVGFLVLMVVLGLV). Residues 869–956 (RIHSLHRRVS…RIIETPPHRY (88 aa)) are Cytoplasmic-facing. Positions 916 to 956 (QSCVTGAVGGQQEDEDSSDSEVADSPSSDERRIIETPPHRY) are disordered. Over residues 927–937 (QEDEDSSDSEV) the composition is skewed to acidic residues. Over residues 943–956 (SDERRIIETPPHRY) the composition is skewed to basic and acidic residues.

It belongs to the calsyntenin family. In terms of assembly, interacts (via cadherin domains) with both alpha and beta isoforms of neurexins (NRXN1, NRXN2 and NRXN3). Directly interacts with APBA2. Forms a tripartite complex with APBA2 and APP. Interacts with low affinity with KLC1. Interacts with SLC23A2/SVCT2. Interacts with CIDEA; inhibiting the lipid transferase activity of CIDEA. Interacts with CIDEC; inhibiting the lipid transferase activity of CIDEC. Post-translationally, proteolytically processed under normal cellular conditions. A primary zeta-cleavage generates a large extracellular (soluble) N-terminal domain (sAlc) and a short C-terminal transmembrane fragment (CTF1). A secondary cleavage catalyzed by gamma-secretase within the transmembrane domain releases the beta-Alc-beta chain in the extracellular milieu and produces an intracellular fragment (AlcICD). This processing is strongly suppressed in the tripartite complex formed with APBA2 and APP, which seems to prevent the association with gamma-secretase. In terms of processing, ubiquitinated: endoplasmic reticulum-localized protein is ubiquitinated and degraded by the endoplasmic reticulum-associated degradation (ERAD) pathway. According to PubMed:12498782, expressed predominantly in the brain and in kidney. Low levels in heart, skeletal muscle, liver, placenta, pancreas and lung. According to PubMed:12972431, predominant expression in brain, and only marginal in kidney. In brain, present throughout all cortical layers, highest levels in GABAergic neurons (based on morphology and distribution pattern). In terms of tissue distribution, expression is restricted to adipose tissue, with high expression in multilocular thermogenic adipocytes (brown adipose tissue).

Its subcellular location is the postsynaptic cell membrane. It localises to the endoplasmic reticulum membrane. The protein resides in the golgi apparatus membrane. It is found in the cell projection. The protein localises to the dendrite. Its subcellular location is the lipid droplet. Postsynaptic adhesion molecule that binds to presynaptic neurexins to mediate both excitatory and inhibitory synapse formation. Promotes synapse development by acting as a cell adhesion molecule at the postsynaptic membrane, which associates with both neurexin-alpha and neurexin-beta proteins at the presynaptic membrane. Regulates the balance between excitatory and inhibitory synapses by inhibiting formation of excitatory parallel-fiber synapses and promoting formation of inhibitory synapses in the same neuron. May also be involved in ascorbate (vitamin C) uptake via its interaction with SLC23A2/SVCT2. Complex formation with APBA2 and APP, stabilizes APP metabolism and enhances APBA2-mediated suppression of beta-APP40 secretion, due to the retardation of intracellular APP maturation. Its function is as follows. Adipose-specific isoform that plays a key role in adaptive thermogenesis. Facilitates the efficient use of stored triglyceride by promoting multilocular morphology of thermogenic adipocytes: acts by inhibiting the activity of CIDEA and CIDEC on lipid droplets, thereby preventing lipid droplet fusion and facilitating lipid utilization. May also participate in adaptive thermogenesis by promoting sympathetic innervation of thermogenic adipose tissue: acts by driving secretion of neurotrophic factor S100B from brown adipocytes, stimulating neurite outgrowth from sympathetic neurons. The sequence is that of Calsyntenin-3 from Homo sapiens (Human).